We begin with the raw amino-acid sequence, 388 residues long: Chaperone protein DnaJ (388 aa).

A J domain is found at 6 to 71; the sequence is DYYEILGVPR…EKRKLYDQFG (66 aa). The segment at 147 to 229 adopts a CR-type zinc-finger fold; that stretch reads GCEKEIPIYR…CGGTGNVRRQ (83 aa). Zn(2+) contacts are provided by C160, C163, C177, C180, C203, C206, C217, and C220. CXXCXGXG motif repeat units lie at residues 160–167, 177–184, 203–210, and 217–224; these read CSVCGGSG, CQKCGGTG, CDACGGTG, and CRECGGTG.

It belongs to the DnaJ family. As to quaternary structure, homodimer. Requires Zn(2+) as cofactor.

It localises to the cytoplasm. Functionally, participates actively in the response to hyperosmotic and heat shock by preventing the aggregation of stress-denatured proteins and by disaggregating proteins, also in an autonomous, DnaK-independent fashion. Unfolded proteins bind initially to DnaJ; upon interaction with the DnaJ-bound protein, DnaK hydrolyzes its bound ATP, resulting in the formation of a stable complex. GrpE releases ADP from DnaK; ATP binding to DnaK triggers the release of the substrate protein, thus completing the reaction cycle. Several rounds of ATP-dependent interactions between DnaJ, DnaK and GrpE are required for fully efficient folding. Also involved, together with DnaK and GrpE, in the DNA replication of plasmids through activation of initiation proteins. This is Chaperone protein DnaJ from Caldicellulosiruptor bescii (strain ATCC BAA-1888 / DSM 6725 / KCTC 15123 / Z-1320) (Anaerocellum thermophilum).